Reading from the N-terminus, the 784-residue chain is Spindle pole body component alp4 (784 aa).

It belongs to the TUBGCP family. In terms of assembly, part of the gamma-tubulin complex. Interacts with mcp6. Interacts with mto1. Interacts with mto2.

The protein resides in the cytoplasm. It is found in the cytoskeleton. The protein localises to the microtubule organizing center. Its subcellular location is the spindle pole body. Functionally, component of the gamma tubule complex that is required for the regulation of both interphase microtubules and mitotic bipolar spindles. In Schizosaccharomyces pombe (strain 972 / ATCC 24843) (Fission yeast), this protein is Spindle pole body component alp4 (alp4).